An 805-amino-acid chain; its full sequence is Muscarinic acetylcholine receptor DM1 (805 aa).

The Extracellular segment spans residues 1–100 (MEPVMSLALA…GFETKGPRYS (100 aa)). Over residues 27–43 (TSTTTTTTTTTSTTTTT) the composition is skewed to low complexity. A disordered region spans residues 27–47 (TSTTTTTTTTTSTTTTTASPA). N-linked (GlcNAc...) asparagine glycosylation is found at Asn-65, Asn-84, and Asn-87. The helical transmembrane segment at 101–121 (LASMVVMGFVAAILSTVTVAG) threads the bilayer. Residues 122 to 141 (NVMVMISFKIDKQLQTISNY) lie on the Cytoplasmic side of the membrane. Residues 142–162 (FLFSLAIADFAIGAISMPLFA) form a helical membrane-spanning segment. Residues 163–177 (VTTILGYWPLGPIVC) lie on the Extracellular side of the membrane. Residues 178-198 (DTWLALDYLASNASVLNLLII) form a helical membrane-spanning segment. Residues 199 to 220 (SFDRYFSVTRPLTYRAKRTTNR) lie on the Cytoplasmic side of the membrane. Residues 221 to 241 (AAVMIGAAWGISLLLWPPWIY) form a helical membrane-spanning segment. The Extracellular portion of the chain corresponds to 242-266 (SWPYIEGKRTVPKDECYIQFIETNQ). Residues 267–287 (YITFGTALAAFYFPVTIMCFL) traverse the membrane as a helical segment. Topologically, residues 288–718 (YWRIWRETKK…KRQESKAAKT (431 aa)) are cytoplasmic. Disordered stretches follow at residues 302–322 (LPNL…SDEN), 340–359 (GNDH…DAES), and 507–530 (GNGN…VNGN). 2 stretches are compositionally biased toward basic and acidic residues: residues 308–318 (GKKDSSKRSNS) and 341–353 (NDHD…RSES). The span at 507–525 (GNGNGAINNNNNASHNGNG) shows a compositional bias: low complexity. A helical transmembrane segment spans residues 719–739 (LSAILLSFIITWTPYNILVLI). At 740-752 (KPLTTCSDCIPTE) the chain is on the extracellular side. The chain crosses the membrane as a helical span at residues 753–773 (LWDFFYALCYINSTINPMCYA). The Cytoplasmic segment spans residues 774-805 (LCNATFRRTYVRILTCKWHTRNREGMVRGVYN).

The protein belongs to the G-protein coupled receptor 1 family. Muscarinic acetylcholine receptor subfamily. Intense staining in the glomeruli of the antennal lobes, the region of the nervous system containing terminals of antennal olfactory sensory neurons and mechanosensory neurons. Also a discrete group of neurosecretory cells in the pars intercerebralis of the brain.

It localises to the cell membrane. The protein localises to the postsynaptic cell membrane. Functionally, the muscarinic acetylcholine receptor mediates various cellular responses, including inhibition of adenylate cyclase, breakdown of phosphoinositides and modulation of potassium channels through the action of G proteins. Primary transducing effect is Pi turnover. May have a role in the processing of olfactory and mechanosensory signals; regulation of neurosecretion. This Drosophila melanogaster (Fruit fly) protein is Muscarinic acetylcholine receptor DM1 (mAChR-A).